The sequence spans 126 residues: UPF0538 protein C2orf76 (126 aa).

It belongs to the UPF0538 family.

The polypeptide is UPF0538 protein C2orf76 (C2orf76) (Homo sapiens (Human)).